A 1101-amino-acid polypeptide reads, in one-letter code: Nuclear pore complex protein NUP107 (1101 aa).

It belongs to the nucleoporin Nup84/Nup107 family. In terms of assembly, part of the nuclear pore complex (NPC). The NPC has an eight-fold symmetrical structure comprising a central transport channel and two rings, the cytoplasmic and nuclear rings, to which eight filaments are attached. The cytoplasmic filaments have loose ends, while the nuclear filaments are joined in a distal ring, forming a nuclear basket. NPCs are highly dynamic in configuration and composition, and can be devided in 3 subcomplexes, the NUP62 subcomplex, the NUP107-160 subcomplex and the NUP93 subcomplex, containing approximately 30 different nucleoporin proteins.

Its subcellular location is the nucleus envelope. The protein localises to the nucleus. The protein resides in the nuclear pore complex. The polypeptide is Nuclear pore complex protein NUP107 (Arabidopsis thaliana (Mouse-ear cress)).